A 338-amino-acid polypeptide reads, in one-letter code: Methionine synthase (338 aa).

H210, C212, E234, and C294 together coordinate Zn(2+).

The protein belongs to the archaeal MetE family. The cofactor is Zn(2+).

Its pathway is amino-acid biosynthesis; L-methionine biosynthesis via de novo pathway. Its function is as follows. Catalyzes the transfer of a methyl group to L-homocysteine resulting in methionine formation. The physiological methyl donor is unknown. The protein is Methionine synthase of Pyrococcus horikoshii (strain ATCC 700860 / DSM 12428 / JCM 9974 / NBRC 100139 / OT-3).